The following is a 253-amino-acid chain: MEKLLIVNADDFGLSKGQNYGVIEAYQHGVVSSTTAMVNGGGAQHAAALSRQYPGLPIGLHFVLTHGKPLGAMPSLVNEHGELGKWLWRRAEAGELSLDEIHEELQRQFARFVTLFGRPPTHIDSHHHVHMQPQIYPLVEAFAQAQGLPLRLDREEAKRRELALQTPCSTDAFDAGFYGEMISEALFLQRLARADEQGAESLEMMCHPAFLDATILQSKYCHPRLVELDVLTAPTLKAAIAERGFLLGSFQDL.

2 residues coordinate Mg(2+): H61 and H126.

This sequence belongs to the YdjC deacetylase family. ChbG subfamily. In terms of assembly, homodimer. The cofactor is Mg(2+).

The protein localises to the cytoplasm. It carries out the reaction N,N'-diacetylchitobiose + H2O = N-acetyl-beta-D-glucosaminyl-(1-&gt;4)-D-glucosamine + acetate. It catalyses the reaction diacetylchitobiose-6'-phosphate + H2O = N'-monoacetylchitobiose-6'-phosphate + acetate. The protein operates within glycan degradation; chitin degradation. Involved in the degradation of chitin. ChbG is essential for growth on the acetylated chitooligosaccharides chitobiose and chitotriose but is dispensable for growth on cellobiose and chitosan dimer, the deacetylated form of chitobiose. Deacetylation of chitobiose-6-P and chitotriose-6-P is necessary for both the activation of the chb promoter by the regulatory protein ChbR and the hydrolysis of phosphorylated beta-glucosides by the phospho-beta-glucosidase ChbF. Catalyzes the removal of only one acetyl group from chitobiose-6-P to yield monoacetylchitobiose-6-P, the inducer of ChbR and the substrate of ChbF. The protein is Chitooligosaccharide deacetylase of Serratia marcescens.